We begin with the raw amino-acid sequence, 287 residues long: Ketoacyl reductase HetN (287 aa).

NAD(+) is bound at residue 11–35; sequence LTGASRGLGVYIARALAKEQATVVC. Ser-142 is a binding site for substrate. Tyr-155 serves as the catalytic Proton acceptor.

The protein belongs to the short-chain dehydrogenases/reductases (SDR) family.

Its function is as follows. May be involved in repressing heterocyst differentiation and may be essential for preventing all vegetative cells from differentiating. This Nostoc sp. (strain PCC 7120 / SAG 25.82 / UTEX 2576) protein is Ketoacyl reductase HetN (hetN).